A 319-amino-acid chain; its full sequence is Transcription elongation factor A protein 1 (319 aa).

One can recognise a TFIIS N-terminal domain in the interval 1–78 (MQEIIKCREQ…DKWKQDIEGT (78 aa)). The segment covering 78–106 (TSATTTSSSSSSSSSTTSTTTTKTASPSE) has biased composition (low complexity). The tract at residues 78 to 146 (TSATTTSSSS…TTPKTSSPPI (69 aa)) is disordered. Over residues 107 to 122 (SLKRKSISEDTSDRPT) the composition is skewed to basic and acidic residues. A compositionally biased stretch (low complexity) spans 133 to 146 (ISPPTTPKTSSPPI). The region spanning 160 to 272 (LRNKTIQLFV…ASMLGQNNEA (113 aa)) is the TFIIS central domain. A TFIIS-type zinc finger spans residues 275–317 (DQFQCGKCKQRKCTYTQLQTRSADEPPTTFVKCCVKGCGNRWR). Residues C279, C282, C307, and C312 each contribute to the Zn(2+) site.

It belongs to the TFS-II family.

Its subcellular location is the nucleus. Its function is as follows. Necessary for efficient RNA polymerase II transcription elongation past template-encoded arresting sites. The arresting sites in DNA have the property of trapping a certain fraction of elongating RNA polymerases that pass through, resulting in locked ternary complexes. Cleavage of the nascent transcript by S-II allows the resumption of elongation from the new 3'-terminus. The sequence is that of Transcription elongation factor A protein 1 (tcea1) from Dictyostelium discoideum (Social amoeba).